Reading from the N-terminus, the 777-residue chain is Endonuclease MutS2 (777 aa).

ATP is bound at residue 328–335 (GPNTGGKT). One can recognise a Smr domain in the interval 702 to 777 (LDLRGKRYEE…GSGCTIATLG (76 aa)).

Belongs to the DNA mismatch repair MutS family. MutS2 subfamily. As to quaternary structure, homodimer. Binds to stalled ribosomes, contacting rRNA.

Endonuclease that is involved in the suppression of homologous recombination and thus may have a key role in the control of bacterial genetic diversity. Its function is as follows. Acts as a ribosome collision sensor, splitting the ribosome into its 2 subunits. Detects stalled/collided 70S ribosomes which it binds and splits by an ATP-hydrolysis driven conformational change. Acts upstream of the ribosome quality control system (RQC), a ribosome-associated complex that mediates the extraction of incompletely synthesized nascent chains from stalled ribosomes and their subsequent degradation. Probably generates substrates for RQC. The chain is Endonuclease MutS2 from Streptococcus uberis (strain ATCC BAA-854 / 0140J).